The following is a 123-amino-acid chain: Transmembrane protein 80 (123 aa).

Helical transmembrane passes span 2-22 (LFHL…LMIV), 35-55 (LALD…QLYL), 68-88 (LAAS…FLLW), and 102-122 (VLLV…ADFI).

Its subcellular location is the membrane. The protein localises to the cell projection. It is found in the cilium. The protein is Transmembrane protein 80 (Tmem80) of Mus musculus (Mouse).